A 246-amino-acid polypeptide reads, in one-letter code: Probable transcriptional regulatory protein Dshi_2762 (246 aa).

This sequence belongs to the TACO1 family.

It localises to the cytoplasm. The chain is Probable transcriptional regulatory protein Dshi_2762 from Dinoroseobacter shibae (strain DSM 16493 / NCIMB 14021 / DFL 12).